A 260-amino-acid polypeptide reads, in one-letter code: Diphthine synthase (260 aa).

Residues L9, D85, I88, 113 to 114 (TA), L168, A208, and H233 each bind S-adenosyl-L-methionine.

The protein belongs to the diphthine synthase family. As to quaternary structure, homodimer.

The enzyme catalyses 2-[(3S)-amino-3-carboxypropyl]-L-histidyl-[translation elongation factor 2] + 3 S-adenosyl-L-methionine = diphthine-[translation elongation factor 2] + 3 S-adenosyl-L-homocysteine + 3 H(+). It functions in the pathway protein modification; peptidyl-diphthamide biosynthesis. Functionally, S-adenosyl-L-methionine-dependent methyltransferase that catalyzes the trimethylation of the amino group of the modified target histidine residue in translation elongation factor 2 (EF-2), to form an intermediate called diphthine. The three successive methylation reactions represent the second step of diphthamide biosynthesis. The sequence is that of Diphthine synthase from Halobacterium salinarum (strain ATCC 29341 / DSM 671 / R1).